The sequence spans 173 residues: Bursicon (173 aa).

The first 32 residues, 1–32 (MLRHLLRHENNKVFVLILLYCVLVSILKLCTA), serve as a signal peptide directing secretion. Cystine bridges form between cysteine 52-cysteine 101, cysteine 66-cysteine 115, cysteine 76-cysteine 136, cysteine 80-cysteine 138, and cysteine 98-cysteine 141. A CTCK domain is found at 52–142 (CQVTPVIHVL…PLECMCRPCT (91 aa)).

Heterodimer of Burs and Pburs. In terms of tissue distribution, expressed in one to two pairs of neurons in each of the thoracic and abdominal neuromeres of the larval CNS. Coexpressed with CCAP in most CCAP-specific neurons. Coexpressed with Pburs in four bilateral neurons in thoracic and abdominal neuromeres of the ventral nervous system.

The protein localises to the secreted. Final heterodimeric neurohormone released at the end of the molting cycle, involved in the sclerotization (tanning) of the insect cuticle, melanization and wing spreading. Heterodimer specifically activates the G protein-coupled receptor rk. In Drosophila melanogaster (Fruit fly), this protein is Bursicon.